The following is a 200-amino-acid chain: Serine/arginine-rich splicing factor RSZ23 (200 aa).

In terms of domain architecture, RRM spans 2-71; that stretch reads ARVYVGNLDP…NGWRVELSTK (70 aa). The segment at 86-103 adopts a CCHC-type zinc-finger fold; sequence MKCYECGEPGHFARECRL. The segment at 105–200 is disordered; that stretch reads IGSGGLGSGR…REESPYANNA (96 aa). Positions 113-139 are enriched in basic residues; sequence GRRRSRSRSRSPRYRGRSRSRSPRYRR.

This sequence belongs to the splicing factor SR family. In terms of processing, extensively phosphorylated on serine residues in the RS domain. Expressed in roots, leaves and immature seeds.

Its subcellular location is the nucleus. In terms of biological role, involved in pre-mRNA splicing. In protoplast assay, enhances splicing efficiency of WAXY intron 1 and alters the selection of the 5'-splice sites by stimulating site 1 (proximal site). The protein is Serine/arginine-rich splicing factor RSZ23 (RSZ23) of Oryza sativa subsp. japonica (Rice).